Here is a 173-residue protein sequence, read N- to C-terminus: NADH-quinone oxidoreductase subunit I 1 (173 aa).

2 consecutive 4Fe-4S ferredoxin-type domains span residues 41–73 (IVLTRDPDGQERCVACNLCAVACPVGCIDLAKA) and 83–112 (EHFRINFARCIFCGYCEEACPTAAIQLTPD). Residues Cys-53, Cys-56, Cys-59, Cys-63, Cys-92, Cys-95, Cys-98, and Cys-102 each coordinate [4Fe-4S] cluster.

The protein belongs to the complex I 23 kDa subunit family. As to quaternary structure, NDH-1 is composed of 14 different subunits. Subunits NuoA, H, J, K, L, M, N constitute the membrane sector of the complex. [4Fe-4S] cluster is required as a cofactor.

It is found in the cell inner membrane. It carries out the reaction a quinone + NADH + 5 H(+)(in) = a quinol + NAD(+) + 4 H(+)(out). Its function is as follows. NDH-1 shuttles electrons from NADH, via FMN and iron-sulfur (Fe-S) centers, to quinones in the respiratory chain. The immediate electron acceptor for the enzyme in this species is believed to be ubiquinone. Couples the redox reaction to proton translocation (for every two electrons transferred, four hydrogen ions are translocated across the cytoplasmic membrane), and thus conserves the redox energy in a proton gradient. The sequence is that of NADH-quinone oxidoreductase subunit I 1 from Rhodopseudomonas palustris (strain BisA53).